A 297-amino-acid polypeptide reads, in one-letter code: MTMESREMDCYLRRLKQELMSMKEVGDGLQDQMNCMMGALQELKLLQVQTALEQLEISGGGPVPGSPEGPRTQCEHPCWEGGRGPARPTVCSPSSQPSLGSSTKFPSHRSVCGRDLAPLPRTQPHQSCAQQGPERVEPDDWTSTLMSRGRNRQPLVLGDNVFADLVGNWLDLPELEKGGEKGETGGAREPKGEKGQPQELGRRFALTANIFKKFLRSVRPDRDRLLKEKPGWVTPMVPESRTGRSQKVKKRSLSKGSGHFPFPGTGEHRRGENPPTSCPKALEHSPSGFDINTAVWV.

3 disordered regions span residues 82 to 109 (GRGP…PSHR), 175 to 200 (LEKG…PQEL), and 234 to 285 (TPMV…LEHS). The span at 92-102 (SPSSQPSLGSS) shows a compositional bias: low complexity. An inka box region spans residues 137–180 (EPDDWTSTLMSRGRNRQPLVLGDNVFADLVGNWLDLPELEKGGE). Basic residues predominate over residues 244-253 (RSQKVKKRSL).

This sequence belongs to the INKA family. Interacts with PAK4.

It is found in the nucleus. In terms of biological role, inhibitor of the serine/threonine-protein kinase PAK4. Acts by binding PAK4 in a substrate-like manner, inhibiting the protein kinase activity. In Homo sapiens (Human), this protein is PAK4-inhibitor INKA2.